The following is a 717-amino-acid chain: MVFGWRKAFCTSVSSNQDKPQQHSSLHTTDPPIPTPRFRSKFGFLSNPSTPRLRSRGGSGTGCRSSASTSVTIPSLPTSPKLHCRTTSNATPRTSNSSSPKFFSNPSSPKSSSSSSSQGGGGVSLLRATLLLNKSNSSRCAICLQRVNSNQSNSTAAIFTAECSHSFHLSCVNGLEDKRCPFCSAAWNHAPKSNYPAVNNNFGSDPIRRPEIREIKTGKSLRVYNDDEPLAYSPVSLAQINTIHESDENDDVEDDDDFPGFFRDSSITSDMVPSISGNLEVKLLPESAVVETGKKKETHVVIMKLKASPSPSSITDAIKARRPSIDLVTVLDLSNGGANLQTVKHAMRSVISLLREMDRLSIVVFSTGSKRLMPLRRMTAKGRRSARRMVDALGGMETTGGVGMSVNDALKKAVKVVEDRREKNPSTSIFVLSDGQDQPEAVLKAKLNATRIPFVVSTTRFSRPEIPVHSVYIASPGALLHAPLRDAFTERIASLLNVTLHNVKLNLSLVNGSHLTEISSVYSLTGRLENFGSGSVIQVGDLFAEEEREFLVELKVPTSSSGSHQVMSVQSSIVDQMTHQPMTCPKEKRFLIPRPQSVRYVSSSIERLRNLHSMCRAVADSRRLIEREDLSGAYQVLTTARSNASHSDDSLRSLEVELNELSRIKPRNSILNRTEDKPEQLTPTSAWRAAEKLAKVAIMRKHLNRVSDMHGLENARF.

Composition is skewed to polar residues over residues 13-28 and 85-94; these read VSSNQDKPQQHSSLHT and RTTSNATPRT. The interval 13-120 is disordered; it reads VSSNQDKPQQ…SSSSSSSQGG (108 aa). Over residues 95 to 117 the composition is skewed to low complexity; that stretch reads SNSSSPKFFSNPSSPKSSSSSSS. The RING-type; atypical zinc-finger motif lies at 140 to 184; that stretch reads CAICLQRVNSNQSNSTAAIFTAECSHSFHLSCVNGLEDKRCPFCS. Residues 326-456 enclose the VWFA domain; the sequence is DLVTVLDLSN…LNATRIPFVV (131 aa).

Expressed in root tips, cotyledons, leaf primordia and hypocotyls.

The enzyme catalyses S-ubiquitinyl-[E2 ubiquitin-conjugating enzyme]-L-cysteine + [acceptor protein]-L-lysine = [E2 ubiquitin-conjugating enzyme]-L-cysteine + N(6)-ubiquitinyl-[acceptor protein]-L-lysine.. In terms of biological role, probable E3 ubiquitin-protein ligase involved in the regulation of root growth. Acts as a positive regulator of root gravitropism. This is Probable E3 ubiquitin-protein ligase WAVH2 from Arabidopsis thaliana (Mouse-ear cress).